Reading from the N-terminus, the 371-residue chain is UDP-N-acetylglucosamine--N-acetylmuramyl-(pentapeptide) pyrophosphoryl-undecaprenol N-acetylglucosamine transferase (371 aa).

UDP-N-acetyl-alpha-D-glucosamine is bound by residues 15-17, asparagine 126, arginine 172, serine 199, isoleucine 256, 275-280, and glutamine 301; these read TGG and ALTVSE.

The protein belongs to the glycosyltransferase 28 family. MurG subfamily.

It is found in the cell inner membrane. The enzyme catalyses di-trans,octa-cis-undecaprenyl diphospho-N-acetyl-alpha-D-muramoyl-L-alanyl-D-glutamyl-meso-2,6-diaminopimeloyl-D-alanyl-D-alanine + UDP-N-acetyl-alpha-D-glucosamine = di-trans,octa-cis-undecaprenyl diphospho-[N-acetyl-alpha-D-glucosaminyl-(1-&gt;4)]-N-acetyl-alpha-D-muramoyl-L-alanyl-D-glutamyl-meso-2,6-diaminopimeloyl-D-alanyl-D-alanine + UDP + H(+). It participates in cell wall biogenesis; peptidoglycan biosynthesis. Functionally, cell wall formation. Catalyzes the transfer of a GlcNAc subunit on undecaprenyl-pyrophosphoryl-MurNAc-pentapeptide (lipid intermediate I) to form undecaprenyl-pyrophosphoryl-MurNAc-(pentapeptide)GlcNAc (lipid intermediate II). The polypeptide is UDP-N-acetylglucosamine--N-acetylmuramyl-(pentapeptide) pyrophosphoryl-undecaprenol N-acetylglucosamine transferase (Francisella tularensis subsp. tularensis (strain FSC 198)).